The chain runs to 57 residues: uncharacterized protein (57 aa).

This is an uncharacterized protein from Ureaplasma parvum serovar 3 (strain ATCC 700970).